Reading from the N-terminus, the 196-residue chain is Putative NADH dehydrogenase/NAD(P)H nitroreductase XCV0587 (196 aa).

Belongs to the nitroreductase family. HadB/RutE subfamily. It depends on FMN as a cofactor.

The protein is Putative NADH dehydrogenase/NAD(P)H nitroreductase XCV0587 of Xanthomonas euvesicatoria pv. vesicatoria (strain 85-10) (Xanthomonas campestris pv. vesicatoria).